A 396-amino-acid chain; its full sequence is Elongation factor Tu 1 (396 aa).

The region spanning Lys-10 to Glu-206 is the tr-type G domain. The segment at Gly-19–Thr-26 is G1. Gly-19 to Thr-26 provides a ligand contact to GTP. Thr-26 contributes to the Mg(2+) binding site. The tract at residues Gly-60–Ser-64 is G2. Residues Asp-81–Gly-84 form a G3 region. GTP contacts are provided by residues Asp-81 to His-85 and Asn-136 to Asp-139. The G4 stretch occupies residues Asn-136–Asp-139. The G5 stretch occupies residues Ser-174 to Leu-176.

Belongs to the TRAFAC class translation factor GTPase superfamily. Classic translation factor GTPase family. EF-Tu/EF-1A subfamily. As to quaternary structure, monomer.

The protein localises to the cytoplasm. It catalyses the reaction GTP + H2O = GDP + phosphate + H(+). In terms of biological role, GTP hydrolase that promotes the GTP-dependent binding of aminoacyl-tRNA to the A-site of ribosomes during protein biosynthesis. The polypeptide is Elongation factor Tu 1 (Rhodospirillum rubrum (strain ATCC 11170 / ATH 1.1.1 / DSM 467 / LMG 4362 / NCIMB 8255 / S1)).